A 534-amino-acid chain; its full sequence is Neryl diphosphate diphosphatase, chloroplastic (534 aa).

Mg(2+) contacts are provided by Asp272, Asp276, Asp416, and Glu424. A DDXXD motif motif is present at residues 272–276 (DDIFD).

The protein belongs to the terpene synthase family. The cofactor is Mg(2+).

It localises to the plastid. Its subcellular location is the chloroplast. It carries out the reaction neryl diphosphate + H2O = nerol + diphosphate. Its pathway is secondary metabolite biosynthesis; terpenoid biosynthesis. Functionally, monoterpene synthase that catalyzes the hydrolysis of neryl diphosphate (NPP) to form nerol and diphosphate. Is specific for NPP and has no hydrolase activity toward geranyl diphosphate (GPP) or farnesyl diphosphate (FPP). The monoterpene nerol may have an insect repellent effect for the plant leaves. This chain is Neryl diphosphate diphosphatase, chloroplastic, found in Glycine max (Soybean).